Consider the following 246-residue polypeptide: 3-deoxy-manno-octulosonate cytidylyltransferase (246 aa).

This sequence belongs to the KdsB family.

It localises to the cytoplasm. It catalyses the reaction 3-deoxy-alpha-D-manno-oct-2-ulosonate + CTP = CMP-3-deoxy-beta-D-manno-octulosonate + diphosphate. It participates in nucleotide-sugar biosynthesis; CMP-3-deoxy-D-manno-octulosonate biosynthesis; CMP-3-deoxy-D-manno-octulosonate from 3-deoxy-D-manno-octulosonate and CTP: step 1/1. It functions in the pathway bacterial outer membrane biogenesis; lipopolysaccharide biosynthesis. Its function is as follows. Activates KDO (a required 8-carbon sugar) for incorporation into bacterial lipopolysaccharide in Gram-negative bacteria. This is 3-deoxy-manno-octulosonate cytidylyltransferase from Bradyrhizobium sp. (strain ORS 278).